A 561-amino-acid chain; its full sequence is Arginine--tRNA ligase (561 aa).

The short motif at 129-139 is the 'HIGH' region element; that stretch reads ANPTGPLHVGH.

Belongs to the class-I aminoacyl-tRNA synthetase family. In terms of assembly, monomer.

The protein localises to the cytoplasm. The enzyme catalyses tRNA(Arg) + L-arginine + ATP = L-arginyl-tRNA(Arg) + AMP + diphosphate. The chain is Arginine--tRNA ligase from Bordetella petrii (strain ATCC BAA-461 / DSM 12804 / CCUG 43448).